A 607-amino-acid chain; its full sequence is Oligoendopeptidase F homolog (607 aa).

His-384 is a Zn(2+) binding site. Residue Glu-385 is part of the active site. Residues His-388 and His-391 each coordinate Zn(2+).

It belongs to the peptidase M3B family. It depends on Zn(2+) as a cofactor.

This is Oligoendopeptidase F homolog (pepF) from Mycoplasma genitalium (strain ATCC 33530 / DSM 19775 / NCTC 10195 / G37) (Mycoplasmoides genitalium).